The following is a 488-amino-acid chain: MKYSDLRDFIAQLESRELLKRIDYPVSPHLEMTLVSDKVLRSGGPALLFTNTPNYNMPVLTNLFGTVERVALGMGEESIVALREIGKLLAALKEPDPPKGFKDAFSKLPLLKQALNMAPKYVSGAECQTHVWEKDEVDLTLLPIQTCWPGDVAPLITWGLVTTRGPHQSRENMGIYRQQLLSKNKLIMRWLSHRGGALDYQAWQQEYPKERFPVAVTLGADPATILAAVTPVPDTLSEYAFAGLLRGQRTRLTRCIGNDLHVPASAEIVLEGYLEPGNEAPEGPYGDHTGYYNEVQSFPVFTVERITHRDKPIYHSTYTGRPPDEPAILGVALNEVFIPLLQKQFPEIVDFYLPPEGCSYRLAVVTIKKQYPGHAKRIMMAVWSFLRQFMYTKFVIVCDDDVDARNWQDVIWAMTTRMDPSRDTVMVENTPIDYLDFASPVSGLGSKMGMDATSKWPGETQREWGKPITMDEDVLNRVNGYWSLLGLK.

N172 contributes to the Mn(2+) binding site. Residues 175-177 (IYR), 189-191 (RWL), and 194-195 (RG) contribute to the prenylated FMN site. E238 provides a ligand contact to Mn(2+). D287 serves as the catalytic Proton donor.

The protein belongs to the UbiD family. As to quaternary structure, homohexamer. Prenylated FMN is required as a cofactor. Mn(2+) serves as cofactor.

It is found in the cell membrane. It catalyses the reaction a 4-hydroxy-3-(all-trans-polyprenyl)benzoate + H(+) = a 2-(all-trans-polyprenyl)phenol + CO2. It functions in the pathway cofactor biosynthesis; ubiquinone biosynthesis. Functionally, catalyzes the decarboxylation of 3-octaprenyl-4-hydroxy benzoate to 2-octaprenylphenol, an intermediate step in ubiquinone biosynthesis. This is 3-octaprenyl-4-hydroxybenzoate carboxy-lyase from Legionella pneumophila subsp. pneumophila (strain Philadelphia 1 / ATCC 33152 / DSM 7513).